A 67-amino-acid polypeptide reads, in one-letter code: DNA-directed RNA polymerase subunit omega (67 aa).

Belongs to the RNA polymerase subunit omega family. As to quaternary structure, the RNAP catalytic core consists of 2 alpha, 1 beta, 1 beta' and 1 omega subunit. When a sigma factor is associated with the core the holoenzyme is formed, which can initiate transcription.

It catalyses the reaction RNA(n) + a ribonucleoside 5'-triphosphate = RNA(n+1) + diphosphate. In terms of biological role, promotes RNA polymerase assembly. Latches the N- and C-terminal regions of the beta' subunit thereby facilitating its interaction with the beta and alpha subunits. This is DNA-directed RNA polymerase subunit omega (rpoZ) from Treponema pallidum (strain Nichols).